We begin with the raw amino-acid sequence, 423 residues long: Imidazolonepropionase (423 aa).

Fe(3+) contacts are provided by His-80 and His-82. The Zn(2+) site is built by His-80 and His-82. 4-imidazolone-5-propanoate contacts are provided by Arg-89, Tyr-152, and His-185. Residue Tyr-152 coordinates N-formimidoyl-L-glutamate. His-250 is a binding site for Fe(3+). His-250 is a binding site for Zn(2+). Gln-253 lines the 4-imidazolone-5-propanoate pocket. Asp-325 contributes to the Fe(3+) binding site. Residue Asp-325 participates in Zn(2+) binding. Residues Asn-327 and Gly-329 each coordinate N-formimidoyl-L-glutamate. Thr-330 contacts 4-imidazolone-5-propanoate.

The protein belongs to the metallo-dependent hydrolases superfamily. HutI family. Zn(2+) serves as cofactor. Fe(3+) is required as a cofactor.

It is found in the cytoplasm. It carries out the reaction 4-imidazolone-5-propanoate + H2O = N-formimidoyl-L-glutamate. The protein operates within amino-acid degradation; L-histidine degradation into L-glutamate; N-formimidoyl-L-glutamate from L-histidine: step 3/3. Catalyzes the hydrolytic cleavage of the carbon-nitrogen bond in imidazolone-5-propanoate to yield N-formimidoyl-L-glutamate. It is the third step in the universal histidine degradation pathway. This Cupriavidus pinatubonensis (strain JMP 134 / LMG 1197) (Cupriavidus necator (strain JMP 134)) protein is Imidazolonepropionase.